A 401-amino-acid chain; its full sequence is Aspartokinase (401 aa).

Belongs to the aspartokinase family.

It carries out the reaction L-aspartate + ATP = 4-phospho-L-aspartate + ADP. It functions in the pathway amino-acid biosynthesis; L-lysine biosynthesis via DAP pathway; (S)-tetrahydrodipicolinate from L-aspartate: step 1/4. It participates in amino-acid biosynthesis; L-methionine biosynthesis via de novo pathway; L-homoserine from L-aspartate: step 1/3. Its pathway is amino-acid biosynthesis; L-threonine biosynthesis; L-threonine from L-aspartate: step 1/5. The sequence is that of Aspartokinase (lysC) from Rickettsia felis (strain ATCC VR-1525 / URRWXCal2) (Rickettsia azadi).